The chain runs to 182 residues: Translation initiation factor IF-3 (182 aa).

Belongs to the IF-3 family. Monomer.

The protein localises to the cytoplasm. Its function is as follows. IF-3 binds to the 30S ribosomal subunit and shifts the equilibrium between 70S ribosomes and their 50S and 30S subunits in favor of the free subunits, thus enhancing the availability of 30S subunits on which protein synthesis initiation begins. This is Translation initiation factor IF-3 from Thermosynechococcus vestitus (strain NIES-2133 / IAM M-273 / BP-1).